The following is a 278-amino-acid chain: Ankyrin repeat and SOCS box protein 13 (278 aa).

ANK repeat units lie at residues 18–47 (VERT…CVNQ), 51–80 (DSIT…QVDA), 84–113 (DGST…KVNP), 116–145 (YTAS…NLEA), 149–178 (HFGT…NVNA), and 181–210 (LHET…NIYA). The 50-residue stretch at 229 to 278 (AKCFEYYEKTPLTLSQLCRVNLRKATGVRGLEKIAKLNIPPRLIDYLSYN) folds into the SOCS box domain.

The protein belongs to the ankyrin SOCS box (ASB) family.

It functions in the pathway protein modification; protein ubiquitination. Functionally, may be a substrate-recognition component of a SCF-like ECS (Elongin-Cullin-SOCS-box protein) E3 ubiquitin-protein ligase complex which mediates the ubiquitination and subsequent proteasomal degradation of target proteins. This Homo sapiens (Human) protein is Ankyrin repeat and SOCS box protein 13 (ASB13).